A 428-amino-acid chain; its full sequence is Threonine synthase (428 aa).

K107 carries the N6-(pyridoxal phosphate)lysine modification.

The protein belongs to the threonine synthase family. It depends on pyridoxal 5'-phosphate as a cofactor.

It carries out the reaction O-phospho-L-homoserine + H2O = L-threonine + phosphate. It functions in the pathway amino-acid biosynthesis; L-threonine biosynthesis; L-threonine from L-aspartate: step 5/5. Is competitively inhibited by L-threo-3-hydroxyhomoserine phosphate. Its function is as follows. Catalyzes the gamma-elimination of phosphate from L-phosphohomoserine and the beta-addition of water to produce L-threonine. To a lesser extent, is able to slowly catalyze the deamination of L-threonine into alpha-ketobutyrate and that of L-serine and 3-chloroalanine into pyruvate. Is also able to rapidly convert vinylglycine to threonine, which proves that the pyridoxal p-quinonoid of vinylglycine is an intermediate in the TS reaction. The polypeptide is Threonine synthase (thrC) (Escherichia coli (strain K12)).